We begin with the raw amino-acid sequence, 478 residues long: Signal recognition particle receptor FtsY (478 aa).

Basic and acidic residues-rich tracts occupy residues 14-33 (KDKA…ERGN) and 45-56 (AEAHDAVDKDPV). A disordered region spans residues 14–94 (KDKAETEERP…DAPLLPGAEL (81 aa)). Residues 71-86 (EAVDVAPAEDDEEEDA) show a composition bias toward acidic residues. Residues 283 to 290 (GVNGTGKT), 365 to 369 (DTAGR), and 429 to 432 (TKLD) contribute to the GTP site.

Belongs to the GTP-binding SRP family. FtsY subfamily. As to quaternary structure, part of the signal recognition particle protein translocation system, which is composed of SRP and FtsY. SRP is a ribonucleoprotein composed of Ffh and a 4.5S RNA molecule.

The protein resides in the cell inner membrane. Its subcellular location is the cytoplasm. The catalysed reaction is GTP + H2O = GDP + phosphate + H(+). Functionally, involved in targeting and insertion of nascent membrane proteins into the cytoplasmic membrane. Acts as a receptor for the complex formed by the signal recognition particle (SRP) and the ribosome-nascent chain (RNC). Interaction with SRP-RNC leads to the transfer of the RNC complex to the Sec translocase for insertion into the membrane, the hydrolysis of GTP by both Ffh and FtsY, and the dissociation of the SRP-FtsY complex into the individual components. The polypeptide is Signal recognition particle receptor FtsY (Agrobacterium fabrum (strain C58 / ATCC 33970) (Agrobacterium tumefaciens (strain C58))).